The sequence spans 242 residues: tRNA pseudouridine synthase A (242 aa).

Asp-51 acts as the Nucleophile in catalysis. Tyr-107 serves as a coordination point for substrate.

The protein belongs to the tRNA pseudouridine synthase TruA family. In terms of assembly, homodimer.

It carries out the reaction uridine(38/39/40) in tRNA = pseudouridine(38/39/40) in tRNA. Functionally, formation of pseudouridine at positions 38, 39 and 40 in the anticodon stem and loop of transfer RNAs. This chain is tRNA pseudouridine synthase A, found in Helicobacter pylori (strain J99 / ATCC 700824) (Campylobacter pylori J99).